Here is a 133-residue protein sequence, read N- to C-terminus: MTMSDPIADMLTRIRNANTAKHDTVDVPASKMKIAIAEILLKEGYIKSFEIEEVGSFKTIHITLKYGKDKNEKVITGLKRISKPGLRVYANSTELPRVLGGLGVAIISTNKGVLTDKAARNANVGGEVLAFIW.

Belongs to the universal ribosomal protein uS8 family. In terms of assembly, part of the 30S ribosomal subunit. Contacts proteins S5 and S12.

One of the primary rRNA binding proteins, it binds directly to 16S rRNA central domain where it helps coordinate assembly of the platform of the 30S subunit. The protein is Small ribosomal subunit protein uS8 of Lachnoclostridium phytofermentans (strain ATCC 700394 / DSM 18823 / ISDg) (Clostridium phytofermentans).